The following is a 116-amino-acid chain: MLVLVGLAGAGAAVGALSRYGIMRLALPLNRWPLPIATLFINLTGALLLGWILTSSLPPNWQIFLGTGIMGGYTTFSTMINELVLLGRNHHQRVAWEYFGLSLVGGLVMVYLGTLI.

4 helical membrane-spanning segments follow: residues 2-22 (LVLV…RYGI), 33-53 (PLPI…GWIL), 63-83 (IFLG…INEL), and 96-116 (WEYF…GTLI). Na(+)-binding residues include G71 and T74.

Belongs to the fluoride channel Fluc/FEX (TC 1.A.43) family.

The protein localises to the cell membrane. The catalysed reaction is fluoride(in) = fluoride(out). With respect to regulation, na(+) is not transported, but it plays an essential structural role and its presence is essential for fluoride channel function. Functionally, fluoride-specific ion channel. Important for reducing fluoride concentration in the cell, thus reducing its toxicity. The protein is Fluoride-specific ion channel FluC 1 of Lactiplantibacillus plantarum (strain ATCC BAA-793 / NCIMB 8826 / WCFS1) (Lactobacillus plantarum).